Consider the following 119-residue polypeptide: Holo-[acyl-carrier-protein] synthase (119 aa).

Residues D8 and E58 each coordinate Mg(2+).

It belongs to the P-Pant transferase superfamily. AcpS family. The cofactor is Mg(2+).

It localises to the cytoplasm. It carries out the reaction apo-[ACP] + CoA = holo-[ACP] + adenosine 3',5'-bisphosphate + H(+). Functionally, transfers the 4'-phosphopantetheine moiety from coenzyme A to a Ser of acyl-carrier-protein. In Limosilactobacillus fermentum (strain NBRC 3956 / LMG 18251) (Lactobacillus fermentum), this protein is Holo-[acyl-carrier-protein] synthase.